Reading from the N-terminus, the 546-residue chain is Probable protein kinase UbiB (546 aa).

In terms of domain architecture, Protein kinase spans 124–502 (DFEIKPLASA…HVRQGQSRYF (379 aa)). Residues 130–138 (LASASIAQV) and Lys-153 contribute to the ATP site. The active-site Proton acceptor is Asp-288. 2 helical membrane passes run 501–521 (YFLGIGATLVLSGTFLLVSRP) and 522–542 (EWGLMPVWLMAGGLIAWFVGW).

This sequence belongs to the ABC1 family. UbiB subfamily.

The protein resides in the cell inner membrane. The protein operates within cofactor biosynthesis; ubiquinone biosynthesis [regulation]. In terms of biological role, is probably a protein kinase regulator of UbiI activity which is involved in aerobic coenzyme Q (ubiquinone) biosynthesis. In Escherichia coli (strain SMS-3-5 / SECEC), this protein is Probable protein kinase UbiB.